The sequence spans 299 residues: Transcription termination/antitermination protein NusG (299 aa).

The tract at residues 30-96 (DPDEAELADA…APVEPAEPVD (67 aa)) is disordered. A run of 2 repeats spans residues 46–49 (EEAA) and 70–73 (EEAA). A 4 X 4 AA repeats of E-E-A-A region spans residues 46–87 (EEAALHVESDEDEDEADVEVDAAVEEAADDAEVAEEEAEEAA). Residues 54 to 87 (SDEDEDEADVEVDAAVEEAADDAEVAEEEAEEAA) show a composition bias toward acidic residues. The stretch at 80-83 (EEEA) is one 3; approximate repeat. Copy 4 of the repeat occupies 84–87 (EEAA). The 29-residue stretch at 248–276 (VGDSVTVTDGPFATLQATINEINPDSKKV) folds into the KOW domain.

The protein belongs to the NusG family. Post-translationally, the N-terminus is blocked.

Participates in transcription elongation, termination and antitermination. The protein is Transcription termination/antitermination protein NusG of Streptomyces virginiae (Streptomyces cinnamonensis).